The chain runs to 70 residues: Cold shock-like protein CspG (70 aa).

The region spanning 7 to 67 (GLVKWFNADK…GQRGPAAANV (61 aa)) is the CSD domain.

The protein localises to the cytoplasm. The sequence is that of Cold shock-like protein CspG (cspG) from Escherichia coli O157:H7.